Consider the following 126-residue polypeptide: Glycine cleavage system H protein (126 aa).

The Lipoyl-binding domain occupies 22–104 (KLRIGITDFA…YEKAWMIVIE (83 aa)). At lysine 63 the chain carries N6-lipoyllysine.

Belongs to the GcvH family. As to quaternary structure, the glycine cleavage system is composed of four proteins: P, T, L and H. (R)-lipoate is required as a cofactor.

Functionally, the glycine cleavage system catalyzes the degradation of glycine. The H protein shuttles the methylamine group of glycine from the P protein to the T protein. Its function is as follows. Is also involved in protein lipoylation via its role as an octanoyl/lipoyl carrier protein intermediate. In Oceanobacillus iheyensis (strain DSM 14371 / CIP 107618 / JCM 11309 / KCTC 3954 / HTE831), this protein is Glycine cleavage system H protein.